We begin with the raw amino-acid sequence, 979 residues long: UPF0182 protein BCG_0095 (979 aa).

7 helical membrane-spanning segments follow: residues 19–39 (LVTA…LVDI), 63–83 (LAIV…ALLL), 114–134 (LFGW…ASFD), 174–194 (WLFV…YLFG), 211–231 (VQLA…YWLD), 260–280 (KLVL…AIFL), and 288–308 (MAAA…PLLM). Residues 898–948 (GTGRVATAPGGDAASAPPPGAGGPAPPQAVPPPRTTQPPAAPPRGPDVPPA) form a disordered region. The segment covering 902 to 912 (VATAPGGDAAS) has biased composition (low complexity). Residues 913–946 (APPPGAGGPAPPQAVPPPRTTQPPAAPPRGPDVP) show a composition bias toward pro residues.

Belongs to the UPF0182 family.

Its subcellular location is the cell membrane. In Mycobacterium bovis (strain BCG / Pasteur 1173P2), this protein is UPF0182 protein BCG_0095.